Reading from the N-terminus, the 612-residue chain is Calcium-dependent protein kinase 27 (612 aa).

The N-myristoyl glycine moiety is linked to residue glycine 2. The segment at 23-132 (PRHAAPSSPS…AHIKRISSAG (110 aa)) is disordered. Positions 28–50 (PSSPSQPTTTSRSIPVVLPSAPS) are enriched in low complexity. Pro residues predominate over residues 51–100 (SKPPPPTQTAPPVPVVISEPPPPQPQPEPQPAAPSQPPPPQEQPSPPPPA). The span at 117 to 127 (SRAKKPAHIKR) shows a compositional bias: basic residues. Residues 150–408 (YSLGRKLGQG…AHEVLCHPWL (259 aa)) enclose the Protein kinase domain. Residues 156–164 (LGQGQFGTT) and lysine 179 contribute to the ATP site. The Proton acceptor role is filled by aspartate 274. The tract at residues 414–444 (APDKPLDSAVLSRLRQFSAMNKLKKMALRVI) is autoinhibitory domain. EF-hand domains follow at residues 451-486 (EEIA…VGAN), 487-522 (MKES…LNKV), 523-558 (ERED…FGIE), and 561-592 (RLED…TTTG). Aspartate 464, aspartate 466, serine 468, glutamine 470, glutamate 475, aspartate 500, aspartate 502, serine 504, threonine 506, glutamate 511, aspartate 536, aspartate 538, serine 540, tyrosine 542, glutamate 547, aspartate 570, aspartate 572, aspartate 574, arginine 576, and glutamate 581 together coordinate Ca(2+).

It belongs to the protein kinase superfamily. Ser/Thr protein kinase family. CDPK subfamily.

The protein resides in the membrane. The catalysed reaction is L-seryl-[protein] + ATP = O-phospho-L-seryl-[protein] + ADP + H(+). It carries out the reaction L-threonyl-[protein] + ATP = O-phospho-L-threonyl-[protein] + ADP + H(+). With respect to regulation, activated by calcium. Autophosphorylation may play an important role in the regulation of the kinase activity. Its function is as follows. May play a role in signal transduction pathways that involve calcium as a second messenger. This is Calcium-dependent protein kinase 27 from Oryza sativa subsp. japonica (Rice).